The following is a 333-amino-acid chain: 1,5-anhydro-D-fructose reductase (333 aa).

NADP(+)-binding positions include 9 to 12, 33 to 34, Arg-38, 71 to 76, 93 to 94, Asn-120, 162 to 163, and Tyr-283; these read ASTI, ST, TTNELH, EK, and WR.

As to quaternary structure, monomer.

The enzyme catalyses 1,5-anhydro-D-mannitol + NADP(+) = 1,5-anhydro-D-fructose + NADPH + H(+). Its function is as follows. Catalyzes the NADPH-specific reduction of 1,5-anhydro-D-fructose to 1,5-anhydro-D-mannitol. Also shows some activity against structurally related compounds such as 3-keto-1,5-anhydro-D-fructose, D-glucosone and D-xylosone. The enzyme cannot use NADH as cosubstrate. This is 1,5-anhydro-D-fructose reductase (afr) from Ensifer adhaerens (Sinorhizobium morelense).